The primary structure comprises 215 residues: Deoxyribose-phosphate aldolase (215 aa).

Catalysis depends on Asp-90, which acts as the Proton donor/acceptor. Lys-152 acts as the Schiff-base intermediate with acetaldehyde in catalysis. The active-site Proton donor/acceptor is Lys-181.

It belongs to the DeoC/FbaB aldolase family. DeoC type 1 subfamily.

The protein resides in the cytoplasm. It carries out the reaction 2-deoxy-D-ribose 5-phosphate = D-glyceraldehyde 3-phosphate + acetaldehyde. Its pathway is carbohydrate degradation; 2-deoxy-D-ribose 1-phosphate degradation; D-glyceraldehyde 3-phosphate and acetaldehyde from 2-deoxy-alpha-D-ribose 1-phosphate: step 2/2. In terms of biological role, catalyzes a reversible aldol reaction between acetaldehyde and D-glyceraldehyde 3-phosphate to generate 2-deoxy-D-ribose 5-phosphate. The polypeptide is Deoxyribose-phosphate aldolase (Ureaplasma parvum serovar 3 (strain ATCC 27815 / 27 / NCTC 11736)).